The sequence spans 569 residues: Phosphoglucomutase 2 (569 aa).

The interval 1–23 (MSFQIETVPTKPYEDQKPGTSGL) is disordered. At Ser-2 the chain carries N-acetylserine. Arg-24 serves as a coordination point for alpha-D-glucose 1,6-bisphosphate. Phosphothreonine is present on residues Thr-111 and Thr-117. Ser-119 lines the alpha-D-glucose 1,6-bisphosphate pocket. Ser-119 functions as the Phosphoserine intermediate in the catalytic mechanism. 4 residues coordinate Mg(2+): Ser-119, Asp-290, Asp-292, and Asp-294. Position 119 is a phosphoserine (Ser-119). Residues Asp-294, Arg-295, Thr-359, Glu-378, Ser-380, and Lys-391 each contribute to the alpha-D-glucose 1,6-bisphosphate site.

The protein belongs to the phosphohexose mutase family. Monomer. Mg(2+) serves as cofactor. Zn(2+) is required as a cofactor. In terms of processing, O-glycosylated with mannose residues. Substrate of UDP-glucose--glycoprotein glucose phosphotransferase, linking glucose in a phosphodiester linkage to O-linked mannose.

It localises to the cytoplasm. It carries out the reaction alpha-D-glucose 1-phosphate = alpha-D-glucose 6-phosphate. It catalyses the reaction O-phospho-L-seryl-[protein] + alpha-D-glucose 1-phosphate = alpha-D-glucose 1,6-bisphosphate + L-seryl-[protein]. The catalysed reaction is alpha-D-glucose 1,6-bisphosphate + L-seryl-[protein] = O-phospho-L-seryl-[protein] + alpha-D-glucose 6-phosphate. Its function is as follows. Major phosphoglucomutase isozyme that catalyzes the reversible isomerization of alpha-D-glucose 1-phosphate to alpha-D-glucose 6-phosphate. The mechanism proceeds via the intermediate compound alpha-D-glucose 1,6-bisphosphate. Constitutes about 80-90% of the phosphoglucomutase activity in the cell. Key enzyme in hexose metabolism. The forward reaction is an essential step in the energy metabolism of galactose since the product of the galactose pathway enzymes in yeast is glucose 1-phosphate. The reverse reaction is an essential step for biosynthesis when carbon sources other than galactose are the energy source because glucose 1-phosphate is the starting point for the synthesis of UDP-glucose, which acts as a precursor for the synthesis of oligosaccharides and trehalose. This chain is Phosphoglucomutase 2, found in Saccharomyces cerevisiae (strain ATCC 204508 / S288c) (Baker's yeast).